The sequence spans 313 residues: Ribosomal RNA small subunit methyltransferase H (313 aa).

S-adenosyl-L-methionine-binding positions include 33–35, aspartate 53, phenylalanine 80, aspartate 102, and glutamine 109; that span reads GGH. The tract at residues 291–313 is disordered; it reads SDEEMRANPRAQSAKLRAAEKIR.

It belongs to the methyltransferase superfamily. RsmH family.

The protein localises to the cytoplasm. It catalyses the reaction cytidine(1402) in 16S rRNA + S-adenosyl-L-methionine = N(4)-methylcytidine(1402) in 16S rRNA + S-adenosyl-L-homocysteine + H(+). Functionally, specifically methylates the N4 position of cytidine in position 1402 (C1402) of 16S rRNA. In Heliobacterium modesticaldum (strain ATCC 51547 / Ice1), this protein is Ribosomal RNA small subunit methyltransferase H.